The following is a 178-amino-acid chain: Cytidylate kinase (178 aa).

7–15 (GLPGSGTTS) contacts ATP.

Belongs to the cytidylate kinase family. Type 2 subfamily.

The protein resides in the cytoplasm. It catalyses the reaction CMP + ATP = CDP + ADP. The catalysed reaction is dCMP + ATP = dCDP + ADP. The polypeptide is Cytidylate kinase (Methanospirillum hungatei JF-1 (strain ATCC 27890 / DSM 864 / NBRC 100397 / JF-1)).